The primary structure comprises 633 residues: DNA mismatch repair protein MutL (633 aa).

It belongs to the DNA mismatch repair MutL/HexB family.

Functionally, this protein is involved in the repair of mismatches in DNA. It is required for dam-dependent methyl-directed DNA mismatch repair. May act as a 'molecular matchmaker', a protein that promotes the formation of a stable complex between two or more DNA-binding proteins in an ATP-dependent manner without itself being part of a final effector complex. The protein is DNA mismatch repair protein MutL of Pseudomonas fluorescens (strain SBW25).